We begin with the raw amino-acid sequence, 356 residues long: Tyrosine recombinase XerS (356 aa).

A Core-binding (CB) domain is found at 16–121 (IMPWYVLEYY…ALSSLFKYLT (106 aa)). Residues 169-354 (EFLEYIDCEY…VNDEQKNALD (186 aa)) form the Tyr recombinase domain. Active-site residues include Arg-210, Lys-234, His-306, Arg-309, and His-332. Tyr-341 functions as the O-(3'-phospho-DNA)-tyrosine intermediate in the catalytic mechanism.

Belongs to the 'phage' integrase family. XerS subfamily.

It is found in the cytoplasm. Its activity is regulated as follows. FtsK is required for recombination. Site-specific tyrosine recombinase, which acts by catalyzing the cutting and rejoining of the recombining DNA molecules. Essential to convert dimers of the bacterial chromosome into monomers to permit their segregation at cell division. This chain is Tyrosine recombinase XerS, found in Streptococcus agalactiae serotype Ia (strain ATCC 27591 / A909 / CDC SS700).